Here is a 596-residue protein sequence, read N- to C-terminus: V-type ATP synthase alpha chain (596 aa).

233 to 240 (GPFGAGKT) is an ATP binding site.

The protein belongs to the ATPase alpha/beta chains family.

It carries out the reaction ATP + H2O + 4 H(+)(in) = ADP + phosphate + 5 H(+)(out). In terms of biological role, produces ATP from ADP in the presence of a proton gradient across the membrane. The V-type alpha chain is a catalytic subunit. The protein is V-type ATP synthase alpha chain of Streptococcus gordonii (strain Challis / ATCC 35105 / BCRC 15272 / CH1 / DL1 / V288).